The following is a 398-amino-acid chain: DnaJ-like protein R260 (398 aa).

The J domain occupies 7 to 72 (DLYEILGLTP…EKRRVYDQYG (66 aa)). The segment at 118–202 (KKTVKVTITV…CKGAGINKSE (85 aa)) adopts a CR-type zinc-finger fold. 4 CXXCXGXG motif repeats span residues 131-138 (CDDCDATG), 147-154 (CKVCRGKG), 173-180 (CHGCQGKK), and 190-197 (CPSCKGAG). The tract at residues 364 to 398 (LRQINTDPSDESQDRDSEESYGGHGRPEGVGCAQQ) is disordered. Residues 371-382 (PSDESQDRDSEE) show a composition bias toward acidic residues.

The cofactor is Zn(2+).

The polypeptide is DnaJ-like protein R260 (Acanthamoeba polyphaga mimivirus (APMV)).